The primary structure comprises 121 residues: Large ribosomal subunit protein bL12 (121 aa).

Belongs to the bacterial ribosomal protein bL12 family. In terms of assembly, homodimer. Part of the ribosomal stalk of the 50S ribosomal subunit. Forms a multimeric L10(L12)X complex, where L10 forms an elongated spine to which 2 to 4 L12 dimers bind in a sequential fashion. Binds GTP-bound translation factors.

In terms of biological role, forms part of the ribosomal stalk which helps the ribosome interact with GTP-bound translation factors. Is thus essential for accurate translation. In Leuconostoc mesenteroides subsp. mesenteroides (strain ATCC 8293 / DSM 20343 / BCRC 11652 / CCM 1803 / JCM 6124 / NCDO 523 / NBRC 100496 / NCIMB 8023 / NCTC 12954 / NRRL B-1118 / 37Y), this protein is Large ribosomal subunit protein bL12.